A 131-amino-acid polypeptide reads, in one-letter code: uncharacterized protein (131 aa).

It is found in the mitochondrion. This is an uncharacterized protein from Arabidopsis thaliana (Mouse-ear cress).